A 363-amino-acid polypeptide reads, in one-letter code: Trichothecene biosynthesis protein 14 (363 aa).

Belongs to the TRI14 family.

Part of the gene cluster that mediates the production of the antimicrobial trichothecene harzianum A (HA) that plays a role in Botrytis cinerea antagonistic activity and plant defense priming. The biosynthesis of harzianum A begins with the cyclization of farnesyl diphosphate to trichodiene and is catalyzed by the trichodiene synthase TRI5. Trichodiene undergoes a series of oxygenations catalyzed by the cytochrome P450 monooxygenase TRI4. TRI4 controls the addition of 3 oxygens at C-2, C-11, and the C-12, C-13-epoxide to form the intermediate isotrichodiol. Isotrichodiol then undergoes a non-enzymatic isomerization and cyclization to form 12,13-epoxytrichothec-9-ene (EPT) which is further converted to trichodermol by the cytochrome P450 monooxygenase TRI11 via C-4 hydroxylation. The last step of HA synthesis is esterification of an octatriendioyl moiety to the C-4 oxygen of trichodermol. The octatriendioyl moiety is probably produced by the polyketide synthase TRI17 and the esterification performed by the trichothecene O-acetyltransferase TRI3. The polypeptide is Trichothecene biosynthesis protein 14 (Trichoderma arundinaceum).